A 160-amino-acid chain; its full sequence is RNA-binding protein 3 (160 aa).

Residues 6–84 (GKLFVGGLNF…RQIRVDHAGK (79 aa)) enclose the RRM domain. R47 bears the Omega-N-methylarginine mark. A disordered region spans residues 81-116 (HAGKSARGSRGGAFGSYERGRGYPRGGGDQGYGSGR). Over residues 103-114 (YPRGGGDQGYGS) the composition is skewed to gly residues. At R105 the chain carries Asymmetric dimethylarginine; alternate. At R105 the chain carries Dimethylated arginine; alternate. An Omega-N-methylarginine; alternate modification is found at R105. An omega-N-methylarginine mark is found at R120 and R134. The tract at residues 135–160 (SRDYGGRSQGGYDRYSGGNYRDNYDN) is disordered. S150 carries the phosphoserine modification. Y158 is subject to Phosphotyrosine.

In terms of assembly, interacts with RPL4. Associates with the 60S ribosomal subunits.

The protein resides in the nucleus. It is found in the cytoplasm. Its subcellular location is the cell projection. It localises to the dendrite. In terms of biological role, cold-inducible mRNA binding protein that enhances global protein synthesis at both physiological and mild hypothermic temperatures. Reduces the relative abundance of microRNAs, when overexpressed. Enhances phosphorylation of translation initiation factors and active polysome formation. In Capra hircus (Goat), this protein is RNA-binding protein 3.